The sequence spans 430 residues: Serine hydroxymethyltransferase (430 aa).

A (6S)-5,6,7,8-tetrahydrofolate-binding site is contributed by 120–122; it reads GHI. N6-(pyridoxal phosphate)lysine is present on K226.

This sequence belongs to the SHMT family. In terms of assembly, homodimer. Pyridoxal 5'-phosphate is required as a cofactor.

The protein localises to the cytoplasm. The protein operates within amino-acid biosynthesis; glycine biosynthesis; glycine from L-serine: step 1/1. In terms of biological role, catalyzes the reversible interconversion of serine and glycine with a modified folate serving as the one-carbon carrier. Also exhibits a pteridine-independent aldolase activity toward beta-hydroxyamino acids, producing glycine and aldehydes, via a retro-aldol mechanism. This chain is Serine hydroxymethyltransferase, found in Pyrobaculum neutrophilum (strain DSM 2338 / JCM 9278 / NBRC 100436 / V24Sta) (Thermoproteus neutrophilus).